A 154-amino-acid polypeptide reads, in one-letter code: MSKKAPGANVIAQNKKARHIYELSDNHEAGISLTGSEVKSLRAGHVNFRDSYVDFRNGEAFLVGLHIAPYDNAGYAQHDPDRDRKLLLHAHEIENLARSVEQKGYTVVPTKLYFARGKVKVDIAVGRGKKLHDQREDLKRRAEDRDTQRELARF.

Residues 134–154 (QREDLKRRAEDRDTQRELARF) form a disordered region.

This sequence belongs to the SmpB family.

It is found in the cytoplasm. In terms of biological role, required for rescue of stalled ribosomes mediated by trans-translation. Binds to transfer-messenger RNA (tmRNA), required for stable association of tmRNA with ribosomes. tmRNA and SmpB together mimic tRNA shape, replacing the anticodon stem-loop with SmpB. tmRNA is encoded by the ssrA gene; the 2 termini fold to resemble tRNA(Ala) and it encodes a 'tag peptide', a short internal open reading frame. During trans-translation Ala-aminoacylated tmRNA acts like a tRNA, entering the A-site of stalled ribosomes, displacing the stalled mRNA. The ribosome then switches to translate the ORF on the tmRNA; the nascent peptide is terminated with the 'tag peptide' encoded by the tmRNA and targeted for degradation. The ribosome is freed to recommence translation, which seems to be the essential function of trans-translation. This chain is SsrA-binding protein, found in Nitratidesulfovibrio vulgaris (strain ATCC 29579 / DSM 644 / CCUG 34227 / NCIMB 8303 / VKM B-1760 / Hildenborough) (Desulfovibrio vulgaris).